The chain runs to 572 residues: MKQSKLLMPTLRDIPAEAEVKSHQLLLKAGYIRPIAAGMFSYLPLAKRVLNKIETIIREEMDKIDANEMLVPEVLPAELWQRSGRYETYGPALYKFKNRQDRDFILGPTHEETFTQLIADEIKSYKKLPLTVYQIQAKFRDENRPRFGLLRTREFIMKDAYSFSADQEGLDEAFHNMEEAYTNIFDRLGLEYRAIVGDAGAMGGSDSKEFSAPAAAGEDTIAYSDATDYAANLEMAKDFYERRSATAEQLALEKISTPNEKTIDDVATLLDKPKNELVKTIMFVADDELVAVVTTGDFEVNEVKVQNYLHADSLVMAEEADVRKAVGAGFGSLGPVGLPEEVKLLVDERAADLANFAAGANEDGMHYVNINWNRDVDLLAENVSDFRTVREGDLAIDGKGKLQFTSGIEIGHIFKLGTRYSKTLGAQVLDNNGRQTDVIMGSYGIGVSRLLSAIAEQKADEDGLVWPASVAPFDIHIVPINMKDEDQARVAEQLETLLVAQGMEVLVDDRKERAGVKFADADLIGLPIRITVGKKADEDVVEVKVRASNTNIEMRVSEVVDSVSVLLNASEK.

The protein belongs to the class-II aminoacyl-tRNA synthetase family. ProS type 1 subfamily. As to quaternary structure, homodimer.

It is found in the cytoplasm. It carries out the reaction tRNA(Pro) + L-proline + ATP = L-prolyl-tRNA(Pro) + AMP + diphosphate. In terms of biological role, catalyzes the attachment of proline to tRNA(Pro) in a two-step reaction: proline is first activated by ATP to form Pro-AMP and then transferred to the acceptor end of tRNA(Pro). As ProRS can inadvertently accommodate and process non-cognate amino acids such as alanine and cysteine, to avoid such errors it has two additional distinct editing activities against alanine. One activity is designated as 'pretransfer' editing and involves the tRNA(Pro)-independent hydrolysis of activated Ala-AMP. The other activity is designated 'posttransfer' editing and involves deacylation of mischarged Ala-tRNA(Pro). The misacylated Cys-tRNA(Pro) is not edited by ProRS. The chain is Proline--tRNA ligase from Leuconostoc mesenteroides subsp. mesenteroides (strain ATCC 8293 / DSM 20343 / BCRC 11652 / CCM 1803 / JCM 6124 / NCDO 523 / NBRC 100496 / NCIMB 8023 / NCTC 12954 / NRRL B-1118 / 37Y).